The primary structure comprises 101 residues: NAD(P)H-quinone oxidoreductase subunit 4L, chloroplastic (101 aa).

3 helical membrane-spanning segments follow: residues 2–22 (MLEH…FGLI), 32–52 (MCLE…SHLF), and 61–81 (IFSI…LAIV).

The protein belongs to the complex I subunit 4L family. NDH is composed of at least 16 different subunits, 5 of which are encoded in the nucleus.

The protein resides in the plastid. The protein localises to the chloroplast thylakoid membrane. The catalysed reaction is a plastoquinone + NADH + (n+1) H(+)(in) = a plastoquinol + NAD(+) + n H(+)(out). It carries out the reaction a plastoquinone + NADPH + (n+1) H(+)(in) = a plastoquinol + NADP(+) + n H(+)(out). In terms of biological role, NDH shuttles electrons from NAD(P)H:plastoquinone, via FMN and iron-sulfur (Fe-S) centers, to quinones in the photosynthetic chain and possibly in a chloroplast respiratory chain. The immediate electron acceptor for the enzyme in this species is believed to be plastoquinone. Couples the redox reaction to proton translocation, and thus conserves the redox energy in a proton gradient. The chain is NAD(P)H-quinone oxidoreductase subunit 4L, chloroplastic from Piper cenocladum (Ant piper).